The chain runs to 712 residues: MGQKVHPLGFRVGITKKHQSQWFARFQKYAYSQSVFEDHMLRTTLVNLFSNLEKESALATKQSKNRGATQPKAPKITQIKIERGLIPYEIGIQIHSNDCLSITKAIDNIKVSKDLVTNLQKTRKYLFKAGTQLKNASMQVSDNLNVAEGENSTMLKTKTSASGTSVLKKRTFKIQTQKPTKGKFVFKGKRKQKKKLSKAVFMRLKNIKRRFKKRQTIKKRYLNIISKGLLIRKKGNLIIRNVKIKRKNKTARLTSRKSQPTLRSGSNLRDNLAPVKSKMQRFNNRMSKKFANLFLTKLNKQFLVRLKAIMKFWHNQNVTKAPLGYNKKWSLAKSYALINNLKAKYLAKDILSLGSLRVQKLRKLISILEKKSLVKMETLRKDFITFGTLSKTRAFGYYQMITFLKQLKELVTKIKKQTIANVTTKQELCCYNKLALNKTKIQNLIRAKSKQTKSITQKVVNNFVKLVDDNQAMANESRKIKWISYLKDLVNKHRTENIFYYLATIATARKDLNALKRYTKQHANFLFGVNVENAKENPNALLQRVTKTLTQYSKNPLVNNDFENAEGLTKLQTAFLTQIESQRKMYKANLALTPKISIKFFSVKTTNLLEKASTVADSIVDALEKRKAFRGVIKKAKEDLMLRSRVTRVKGVKIQVAGRLNGAEIARSEWVRAGRVPLQTLRANIDYAYRTANTIYGIIGVKVWIFKGYSKI.

The interval 1–118 is S3-like 1st part; that stretch reads MGQKVHPLGF…IKVSKDLVTN (118 aa). Residues 119-580 form an intervening sequence (IVS) region; sequence LQKTRKYLFK…LQTAFLTQIE (462 aa). Residues 581–712 form an S3-like 2nd part region; that stretch reads SQRKMYKANL…VWIFKGYSKI (132 aa).

The protein belongs to the universal ribosomal protein uS3 family. Part of the 30S ribosomal subunit.

The protein localises to the plastid. It localises to the chloroplast. The protein is Small ribosomal subunit protein uS3c (rps3) of Chlamydomonas reinhardtii (Chlamydomonas smithii).